Reading from the N-terminus, the 529-residue chain is All-trans-zeta-carotene desaturase (529 aa).

12 to 45 (IVVGAGPGGLSAAINLAGQGFRVTVVEKDAVPGG) provides a ligand contact to FAD.

This sequence belongs to the carotenoid/retinoid oxidoreductase family. The cofactor is FAD.

It carries out the reaction all-trans-zeta-carotene + 2 A = all-trans-lycopene + 2 AH2. Its pathway is carotenoid biosynthesis; lycopene biosynthesis. Dehydrogenates carotenes in the trans conformation: converts all-trans-zeta-carotene into all-trans-lycopene, one of the last dehydrogenation steps of lycopene biosynthesis. This chain is All-trans-zeta-carotene desaturase (carC), found in Myxococcus xanthus.